We begin with the raw amino-acid sequence, 407 residues long: Tryptophan synthase beta chain (407 aa).

Lys91 is modified (N6-(pyridoxal phosphate)lysine).

It belongs to the TrpB family. As to quaternary structure, tetramer of two alpha and two beta chains. Requires pyridoxal 5'-phosphate as cofactor.

It carries out the reaction (1S,2R)-1-C-(indol-3-yl)glycerol 3-phosphate + L-serine = D-glyceraldehyde 3-phosphate + L-tryptophan + H2O. Its pathway is amino-acid biosynthesis; L-tryptophan biosynthesis; L-tryptophan from chorismate: step 5/5. Its function is as follows. The beta subunit is responsible for the synthesis of L-tryptophan from indole and L-serine. The sequence is that of Tryptophan synthase beta chain from Streptococcus pneumoniae serotype 2 (strain D39 / NCTC 7466).